Reading from the N-terminus, the 437-residue chain is Ribosomal protein uS12 methylthiotransferase RimO (437 aa).

The region spanning 9-125 is the MTTase N-terminal domain; sequence PAIFLLSLGC…VLAAIGAHYC (117 aa). The [4Fe-4S] cluster site is built by cysteine 18, cysteine 54, cysteine 88, cysteine 149, cysteine 153, and cysteine 156. The Radical SAM core domain occupies 135 to 364; that stretch reads LTPPHYAFLK…MELQESIAAS (230 aa). The TRAM domain maps to 367–434; the sequence is RKLEGQTLTV…AYELFGRVGS (68 aa).

The protein belongs to the methylthiotransferase family. RimO subfamily. [4Fe-4S] cluster serves as cofactor.

Its subcellular location is the cytoplasm. The enzyme catalyses L-aspartate(89)-[ribosomal protein uS12]-hydrogen + (sulfur carrier)-SH + AH2 + 2 S-adenosyl-L-methionine = 3-methylsulfanyl-L-aspartate(89)-[ribosomal protein uS12]-hydrogen + (sulfur carrier)-H + 5'-deoxyadenosine + L-methionine + A + S-adenosyl-L-homocysteine + 2 H(+). Functionally, catalyzes the methylthiolation of an aspartic acid residue of ribosomal protein uS12. This is Ribosomal protein uS12 methylthiotransferase RimO from Chlorobaculum parvum (strain DSM 263 / NCIMB 8327) (Chlorobium vibrioforme subsp. thiosulfatophilum).